A 247-amino-acid polypeptide reads, in one-letter code: UDP-2,3-diacylglucosamine hydrolase (247 aa).

Mn(2+) contacts are provided by aspartate 8, histidine 10, aspartate 41, asparagine 79, and histidine 114. 79 to 80 contacts substrate; it reads NR. Aspartate 122, serine 160, aspartate 171, asparagine 174, and histidine 202 together coordinate substrate. Residues histidine 202 and histidine 204 each coordinate Mn(2+).

The protein belongs to the LpxH family. Mn(2+) serves as cofactor.

The protein resides in the cell inner membrane. It catalyses the reaction UDP-2-N,3-O-bis[(3R)-3-hydroxytetradecanoyl]-alpha-D-glucosamine + H2O = 2-N,3-O-bis[(3R)-3-hydroxytetradecanoyl]-alpha-D-glucosaminyl 1-phosphate + UMP + 2 H(+). Its pathway is glycolipid biosynthesis; lipid IV(A) biosynthesis; lipid IV(A) from (3R)-3-hydroxytetradecanoyl-[acyl-carrier-protein] and UDP-N-acetyl-alpha-D-glucosamine: step 4/6. Its function is as follows. Hydrolyzes the pyrophosphate bond of UDP-2,3-diacylglucosamine to yield 2,3-diacylglucosamine 1-phosphate (lipid X) and UMP by catalyzing the attack of water at the alpha-P atom. Involved in the biosynthesis of lipid A, a phosphorylated glycolipid that anchors the lipopolysaccharide to the outer membrane of the cell. This is UDP-2,3-diacylglucosamine hydrolase from Xanthomonas oryzae pv. oryzae (strain MAFF 311018).